Consider the following 538-residue polypeptide: Natural resistance-associated macrophage protein 1 (538 aa).

The disordered stretch occupies residues 1–36 (MTGDTDPPKQSRTQYGSISSSPSPGPPQVPPGGTYL). The Cytoplasmic portion of the chain corresponds to 1-54 (MTGDTDPPKQSRTQYGSISSSPSPGPPQVPPGGTYLSEKIPIPNAEPGTFSLRK). A helical membrane pass occupies residues 55 to 75 (LWAFTGPGFLMSIAYLDPGNI). Topologically, residues 76-81 (QSDLQA) are extracellular. A helical transmembrane segment spans residues 82 to 102 (GAVAGFKLLWVLLWATVLGLL). Topologically, residues 103–139 (CQRLAARLGVVTGKDLGEICHLYYPKVPRTLLWLNME) are cytoplasmic. A helical transmembrane segment spans residues 140–160 (LAIVGSDMQEVIGTAIAFNLL). The Extracellular segment spans residues 161 to 164 (SAGR). The chain crosses the membrane as a helical span at residues 165–185 (IPLWGGVLITVVDTFFFLYLN). Residues 186 to 193 (NYGLRKLE) lie on the Cytoplasmic side of the membrane. A helical transmembrane segment spans residues 194–214 (AFFAFLIAIMAFTFGYEYVVA). Residues 215 to 240 (RPAQGALLRGLFLPSCSGCGQPELLQ) lie on the Extracellular side of the membrane. A helical membrane pass occupies residues 241–261 (AVGIVGAIIMPHNIYLHSALV). Residues 262–286 (KSREVDRTRREDIREANMYFLIEST) are Cytoplasmic-facing. Residues 287 to 307 (IALFVSFFINLFVMAVFGQAF) form a helical membrane-spanning segment. The Extracellular portion of the chain corresponds to 308–346 (YQQTNQAAFNICANSSLHDYAKIFPRNNLTVAVDFYQGG). 2 N-linked (GlcNAc...) asparagine glycosylation sites follow: Asn-321 and Asn-335. The chain crosses the membrane as a helical span at residues 347–367 (VILGCLFGPAALYIWAVGLLA). Residues 368 to 394 (AGQSSTMTGTYAGQFVMEGFLKLRWSR) lie on the Cytoplasmic side of the membrane. Residues 395 to 415 (FARLLLTRSCAILPALLVAVF) traverse the membrane as a helical segment. Over 416 to 432 (KELQDLSSLNDLLNVLQ) the chain is Extracellular. The helical transmembrane segment at 433–453 (SLLLPFAVLPILTFTSMPALM) threads the bilayer. The Cytoplasmic segment spans residues 454–468 (QEFASGRVNKVITSS). The chain crosses the membrane as a helical span at residues 469–489 (IMLLVCAINFYFLVSYLPSLP). At 490–492 (HPA) the chain is on the extracellular side. Residues 493–513 (YFGLVALLAVIYLGLTTYLVW) traverse the membrane as a helical segment. Residues 514–538 (TCLIAHGATLLVHSSHQHFLYGLLE) are Cytoplasmic-facing.

Belongs to the NRAMP family.

Its subcellular location is the late endosome membrane. The protein resides in the lysosome membrane. It carries out the reaction Zn(2+)(in) + H(+)(out) = Zn(2+)(out) + H(+)(in). It catalyses the reaction Fe(2+)(in) + H(+)(out) = Fe(2+)(out) + H(+)(in). The catalysed reaction is Mn(2+)(in) + H(+)(out) = Mn(2+)(out) + H(+)(in). Its function is as follows. Macrophage-specific antiporter that fluxes metal ions in either direction against a proton gradient. Localized to late endosomal lysosomal membranes, delivers bivalent cations from the cytosol into these acidic compartments where they may directly affect antimicrobial activity. Involved in iron metabolism and host natural resistance to infection with intracellular parasites. Pathogen resistance involves sequestration of Fe(2+) and Mn(2+), cofactors of both prokaryotic and eukaryotic catalases and superoxide dismutases, not only to protect the macrophage against its own generation of reactive oxygen species, but to deny the cations to the pathogen for synthesis of its protective enzymes. The protein is Natural resistance-associated macrophage protein 1 (SLC11A1) of Sus scrofa (Pig).